An 867-amino-acid chain; its full sequence is Putative ubiquitin thioesterase L96 (867 aa).

4 disordered regions span residues 49–73 (VNQYSTNPPSSSSESDDDEDMGKQD), 177–204 (IKSVSPSRSPSPRRSRSPSPNIQNMKKK), 231–271 (YILS…PKYR), and 379–591 (LSTQ…YKGG). 2 stretches are compositionally biased toward basic residues: residues 234–258 (SRKKSPSPVRKSRSPSLRQRSRSPG) and 421–430 (KITRKPKSPR). Low complexity-rich tracts occupy residues 433 to 462 (PPASVRRSRTPSVPKSPSARPRSKSPSVRA) and 472 to 551 (PPSS…KSPS). Polar residues predominate over residues 565–575 (ITVDPSVTPPS). The segment covering 582-591 (RPELPEYKGG) has biased composition (basic and acidic residues). Residues 606-745 (YKVIPVKGDG…DYHYTALTPL (140 aa)) enclose the OTU domain. Residue aspartate 614 is part of the active site. Cysteine 617 serves as the catalytic Nucleophile. The active site involves histidine 738.

The catalysed reaction is Thiol-dependent hydrolysis of ester, thioester, amide, peptide and isopeptide bonds formed by the C-terminal Gly of ubiquitin (a 76-residue protein attached to proteins as an intracellular targeting signal).. In terms of biological role, hydrolase that can remove conjugated ubiquitin from proteins and may therefore play an important regulatory role at the level of protein turnover by preventing degradation. May be involved in TIV genomic DNA packaging in a manner related to the Gag polyproteins of the mammalian viruses. The chain is Putative ubiquitin thioesterase L96 from Tipula iridescent virus (TIV).